Here is a 471-residue protein sequence, read N- to C-terminus: Glutamate--tRNA ligase (471 aa).

A 'HIGH' region motif is present at residues 9 to 19; that stretch reads PSPTGYLHVGG. Residues C98, C100, C125, and H127 each contribute to the Zn(2+) site. A 'KMSKS' region motif is present at residues 237 to 241; sequence KLSKR. Residue K240 coordinates ATP.

The protein belongs to the class-I aminoacyl-tRNA synthetase family. Glutamate--tRNA ligase type 1 subfamily. In terms of assembly, monomer. Zn(2+) serves as cofactor.

It localises to the cytoplasm. It carries out the reaction tRNA(Glu) + L-glutamate + ATP = L-glutamyl-tRNA(Glu) + AMP + diphosphate. Its function is as follows. Catalyzes the attachment of glutamate to tRNA(Glu) in a two-step reaction: glutamate is first activated by ATP to form Glu-AMP and then transferred to the acceptor end of tRNA(Glu). The polypeptide is Glutamate--tRNA ligase (Escherichia coli (strain SMS-3-5 / SECEC)).